Reading from the N-terminus, the 134-residue chain is uncharacterized protein (134 aa).

The protein belongs to the ycf68 family.

The protein localises to the plastid. It is found in the chloroplast. This is an uncharacterized protein from Saccharum hybrid (Sugarcane).